Reading from the N-terminus, the 330-residue chain is ADP-L-glycero-D-manno-heptose-6-epimerase (330 aa).

NADP(+) is bound by residues 11 to 12, 32 to 33, K39, K54, 75 to 79, and N92; these read FI, DN, and EGACS. The active-site Proton acceptor is the Y139. Residue K143 participates in NADP(+) binding. N168 lines the substrate pocket. NADP(+)-binding residues include V169 and K177. The active-site Proton acceptor is the K177. Residues R179, H186, 200–203, R213, and Y292 each bind substrate; that span reads FGEY.

It belongs to the NAD(P)-dependent epimerase/dehydratase family. HldD subfamily. As to quaternary structure, homopentamer. It depends on NADP(+) as a cofactor.

It carries out the reaction ADP-D-glycero-beta-D-manno-heptose = ADP-L-glycero-beta-D-manno-heptose. The protein operates within nucleotide-sugar biosynthesis; ADP-L-glycero-beta-D-manno-heptose biosynthesis; ADP-L-glycero-beta-D-manno-heptose from D-glycero-beta-D-manno-heptose 7-phosphate: step 4/4. Functionally, catalyzes the interconversion between ADP-D-glycero-beta-D-manno-heptose and ADP-L-glycero-beta-D-manno-heptose via an epimerization at carbon 6 of the heptose. The sequence is that of ADP-L-glycero-D-manno-heptose-6-epimerase from Burkholderia multivorans (strain ATCC 17616 / 249).